We begin with the raw amino-acid sequence, 91 residues long: Acylphosphatase (91 aa).

Residues 5-91 enclose the Acylphosphatase-like domain; that stretch reads CLHAYVGGRV…QGIAGFIVRR (87 aa). Active-site residues include R20 and N38.

This sequence belongs to the acylphosphatase family.

The enzyme catalyses an acyl phosphate + H2O = a carboxylate + phosphate + H(+). This chain is Acylphosphatase (acyP), found in Pseudomonas paraeruginosa (strain DSM 24068 / PA7) (Pseudomonas aeruginosa (strain PA7)).